The sequence spans 460 residues: Phosphoglucomutase (460 aa).

Serine 103 serves as the catalytic Phosphoserine intermediate. Serine 103 serves as a coordination point for Mg(2+). Residues 103–104 and lysine 113 each bind substrate; that span reads SH. Mg(2+) is bound by residues aspartate 239, aspartate 241, and aspartate 243. Residues 243-244, threonine 303, and 322-324 each bind substrate; these read DR and EMS.

The protein belongs to the phosphohexose mutase family. It depends on Mg(2+) as a cofactor.

Its subcellular location is the cytoplasm. It catalyses the reaction alpha-D-glucose 1-phosphate = alpha-D-glucose 6-phosphate. In terms of biological role, this enzyme participates in both the breakdown and synthesis of glucose. This is Phosphoglucomutase (pgm) from Neisseria meningitidis serogroup A / serotype 4A (strain DSM 15465 / Z2491).